We begin with the raw amino-acid sequence, 337 residues long: 1-aminocyclopropane-1-carboxylate deaminase (337 aa).

Lys50 is subject to N6-(pyridoxal phosphate)lysine. The active-site Nucleophile is the Ser77.

This sequence belongs to the ACC deaminase/D-cysteine desulfhydrase family. As to quaternary structure, homotrimer. Pyridoxal 5'-phosphate is required as a cofactor.

It catalyses the reaction 1-aminocyclopropane-1-carboxylate + H2O = 2-oxobutanoate + NH4(+). Functionally, catalyzes a cyclopropane ring-opening reaction, the irreversible conversion of 1-aminocyclopropane-1-carboxylate (ACC) to ammonia and alpha-ketobutyrate. Allows growth on ACC as a nitrogen source. In Rhizobium rhizogenes (strain K84 / ATCC BAA-868) (Agrobacterium radiobacter), this protein is 1-aminocyclopropane-1-carboxylate deaminase.